Consider the following 332-residue polypeptide: UDP-N-acetylenolpyruvoylglucosamine reductase (332 aa).

An FAD-binding PCMH-type domain is found at 55–221 (VGGAADLYVA…TQATLQLAPG (167 aa)). Residue Arg-200 is part of the active site. Residue Ser-251 is the Proton donor of the active site. Glu-321 is an active-site residue.

Belongs to the MurB family. Requires FAD as cofactor.

It is found in the cytoplasm. The enzyme catalyses UDP-N-acetyl-alpha-D-muramate + NADP(+) = UDP-N-acetyl-3-O-(1-carboxyvinyl)-alpha-D-glucosamine + NADPH + H(+). It functions in the pathway cell wall biogenesis; peptidoglycan biosynthesis. In terms of biological role, cell wall formation. The chain is UDP-N-acetylenolpyruvoylglucosamine reductase from Nostoc punctiforme (strain ATCC 29133 / PCC 73102).